The following is a 466-amino-acid chain: Asparagine--tRNA ligase (466 aa).

The protein belongs to the class-II aminoacyl-tRNA synthetase family. In terms of assembly, homodimer.

Its subcellular location is the cytoplasm. It carries out the reaction tRNA(Asn) + L-asparagine + ATP = L-asparaginyl-tRNA(Asn) + AMP + diphosphate + H(+). The polypeptide is Asparagine--tRNA ligase (Buchnera aphidicola subsp. Baizongia pistaciae (strain Bp)).